A 153-amino-acid polypeptide reads, in one-letter code: Cytochrome c-type biogenesis protein CcmE (153 aa).

Residues Met-1–Arg-7 are Cytoplasmic-facing. The helical; Signal-anchor for type II membrane protein transmembrane segment at Leu-8–Ala-28 threads the bilayer. At Phe-29–Arg-153 the chain is on the periplasmic side. Heme is bound by residues His-120 and Tyr-124. Positions Ala-130–Arg-153 are disordered. A compositionally biased stretch (polar residues) spans Gln-141 to Arg-153.

The protein belongs to the CcmE/CycJ family.

It is found in the cell inner membrane. Its function is as follows. Heme chaperone required for the biogenesis of c-type cytochromes. Transiently binds heme delivered by CcmC and transfers the heme to apo-cytochromes in a process facilitated by CcmF and CcmH. This is Cytochrome c-type biogenesis protein CcmE from Leptothrix cholodnii (strain ATCC 51168 / LMG 8142 / SP-6) (Leptothrix discophora (strain SP-6)).